The primary structure comprises 244 residues: Putative outer membrane protein RC0105 (244 aa).

Residues 1-23 (MLRIVKKLGIILFVSTISINSFA) form the signal peptide.

It belongs to the OmpW/AlkL family.

The protein localises to the cell outer membrane. The protein is Putative outer membrane protein RC0105 of Rickettsia conorii (strain ATCC VR-613 / Malish 7).